We begin with the raw amino-acid sequence, 243 residues long: Variant surface antigen E (243 aa).

The signal sequence occupies residues 1–29 (MKKSIFSKKLLVSFGSLVTLAAIPLIAIS). The N-palmitoyl cysteine moiety is linked to residue Cys-30. Cys-30 carries S-diacylglycerol cysteine lipidation. The interval 34-243 (TDNLSQSQQP…TTSDGQNQNK (210 aa)) is disordered. Residues 52 to 92 (GTNTENGSNNGSGSGTTNSSGGTNQSGSASGNGSSNSSVST) are compositionally biased toward low complexity. The segment covering 93-243 (PDGQHSNPSN…TTSDGQNQNK (151 aa)) has biased composition (polar residues). Tandem repeats lie at residues 97–109 (HSNPSNPTTSDPK), 110–122 (ESNPSNPTTSDPK), 123–135 (ESNPSNPTTSDGQ), 136–148 (HSNPSNPTTSDPK), 149–161 (ESNPSNPTTSDGQ), 162–174 (HSNPSNPTTSDGQ), 175–187 (HSNPSNPTTSDGQ), 188–200 (HSNPSNPTTSDGQ), 201–213 (HSNPSNPTTSDGQ), 214–226 (HSNPSNPTTSDGQ), and 227–239 (HSNPSNPTTSDGQ). Residues 97 to 239 (HSNPSNPTTS…PSNPTTSDGQ (143 aa)) form an 11 X 13 AA tandem repeats region.

The protein resides in the cell membrane. Functionally, responsible for the antigenic diversity for host adaptation. Expression in E.coli of a construct containing vlpD, vlpE, and vlpF yields antigenically distinguishable products corresponding to each gene. The protein is Variant surface antigen E (vlpE) of Mesomycoplasma hyorhinis (Mycoplasma hyorhinis).